We begin with the raw amino-acid sequence, 160 residues long: Small ribosomal subunit protein bS6 (160 aa).

2 stretches are compositionally biased toward basic and acidic residues: residues 94 to 119 (EEHE…RGGR) and 125 to 152 (RGDR…REDA). Residues 94–160 (EEHEEGPSAM…DADTAAASEE (67 aa)) form a disordered region.

This sequence belongs to the bacterial ribosomal protein bS6 family.

Binds together with bS18 to 16S ribosomal RNA. This is Small ribosomal subunit protein bS6 from Rhodopseudomonas palustris (strain BisB5).